The sequence spans 648 residues: Wilms tumor protein 1-interacting protein homolog (648 aa).

Disordered stretches follow at residues 27–56 (DGMYGEPNPDMEKTKRMNGSSSTPGNKVYS), 142–291 (SNSL…SPRS), and 306–327 (SPRSSISSHSSRSSRSSRGSMS). 2 stretches are compositionally biased toward low complexity: residues 158-171 (SPRSSLASSHSSQD) and 178-192 (PRSSISSPRSSLVSP). Composition is skewed to polar residues over residues 197-213 (GTSVISPRSSYASTASD) and 220-241 (PRTSLNSYDCGSKPSSNRTSGI). Low complexity predominate over residues 252–267 (PRSSTTSPRSSYSDSR). LIM zinc-binding domains follow at residues 437–498 (GICV…SGFQ), 502–561 (EKCF…TVFA), and 562–631 (PKCA…RLKT).

This sequence belongs to the zyxin/ajuba family.

Its subcellular location is the cell junction. It is found in the adherens junction. The protein resides in the nucleus. In terms of biological role, may monitor slit diaphragm protein assembly, a specialized adherens junction characteristic of podocytes. In case of podocyte injury, it shuttles into the nucleus and acts as a transcription regulator. Plays a role in the regulation of cell morphology and cytoskeletal organization. Acts as a transcriptional corepressor for snai1 and snai2/slug and plays a role in regulating neural crest development. This is Wilms tumor protein 1-interacting protein homolog (wtip) from Danio rerio (Zebrafish).